Consider the following 79-residue polypeptide: Protein OPG081 (79 aa).

Residues 2–8 (VDAITVL) are Intravirion-facing. Residues 9 to 29 (TAIGITVLMLLMVISGAALIV) form a helical membrane-spanning segment. Topologically, residues 30-47 (KELNPNDIFTMQSLKFNR) are virion surface. A helical transmembrane segment spans residues 48–68 (AVTIFKYIGLFIYIPGTIILY). Residues 69–79 (ATYVKSLLMKS) are Intravirion-facing.

The protein belongs to the orthopoxvirus OPG081 family.

It localises to the virion membrane. In terms of biological role, envelope protein. The sequence is that of Protein OPG081 (OPG081) from Vaccinia virus (strain Western Reserve) (VACV).